The following is a 465-amino-acid chain: ATP synthase subunit beta (465 aa).

G152–T159 lines the ATP pocket.

It belongs to the ATPase alpha/beta chains family. As to quaternary structure, F-type ATPases have 2 components, CF(1) - the catalytic core - and CF(0) - the membrane proton channel. CF(1) has five subunits: alpha(3), beta(3), gamma(1), delta(1), epsilon(1). CF(0) has three main subunits: a(1), b(2) and c(9-12). The alpha and beta chains form an alternating ring which encloses part of the gamma chain. CF(1) is attached to CF(0) by a central stalk formed by the gamma and epsilon chains, while a peripheral stalk is formed by the delta and b chains.

The protein resides in the cell inner membrane. It carries out the reaction ATP + H2O + 4 H(+)(in) = ADP + phosphate + 5 H(+)(out). Produces ATP from ADP in the presence of a proton gradient across the membrane. The catalytic sites are hosted primarily by the beta subunits. The protein is ATP synthase subunit beta of Campylobacter hominis (strain ATCC BAA-381 / DSM 21671 / CCUG 45161 / LMG 19568 / NCTC 13146 / CH001A).